A 424-amino-acid chain; its full sequence is CinA-like protein (424 aa).

Belongs to the CinA family.

The chain is CinA-like protein from Prochlorococcus marinus (strain MIT 9301).